A 392-amino-acid chain; its full sequence is Major outer membrane protein P.IA (392 aa).

A signal peptide spans 1 to 19 (MRKKLTALVLSALPLAAVA).

Belongs to the Gram-negative porin family. As to quaternary structure, homotrimer.

It localises to the cell outer membrane. Its function is as follows. Serves as a slightly cation selective porin. Major antigen on the gonococcal cell surface and it may have pathogenic properties in addition to its porin activity. In Neisseria meningitidis serogroup B (strain ATCC BAA-335 / MC58), this protein is Major outer membrane protein P.IA (porA).